A 212-amino-acid chain; its full sequence is Uridine kinase (212 aa).

13–20 lines the ATP pocket; the sequence is GASASGKS.

This sequence belongs to the uridine kinase family.

Its subcellular location is the cytoplasm. The catalysed reaction is uridine + ATP = UMP + ADP + H(+). It catalyses the reaction cytidine + ATP = CMP + ADP + H(+). Its pathway is pyrimidine metabolism; CTP biosynthesis via salvage pathway; CTP from cytidine: step 1/3. It participates in pyrimidine metabolism; UMP biosynthesis via salvage pathway; UMP from uridine: step 1/1. This chain is Uridine kinase, found in Shewanella oneidensis (strain ATCC 700550 / JCM 31522 / CIP 106686 / LMG 19005 / NCIMB 14063 / MR-1).